The primary structure comprises 171 residues: Crossover junction endodeoxyribonuclease RuvC (171 aa).

Residues Asp7, Glu66, and Asp138 contribute to the active site. Mg(2+) is bound by residues Asp7, Glu66, and Asp138.

It belongs to the RuvC family. Homodimer which binds Holliday junction (HJ) DNA. The HJ becomes 2-fold symmetrical on binding to RuvC with unstacked arms; it has a different conformation from HJ DNA in complex with RuvA. In the full resolvosome a probable DNA-RuvA(4)-RuvB(12)-RuvC(2) complex forms which resolves the HJ. It depends on Mg(2+) as a cofactor.

It is found in the cytoplasm. The catalysed reaction is Endonucleolytic cleavage at a junction such as a reciprocal single-stranded crossover between two homologous DNA duplexes (Holliday junction).. Its function is as follows. The RuvA-RuvB-RuvC complex processes Holliday junction (HJ) DNA during genetic recombination and DNA repair. Endonuclease that resolves HJ intermediates. Cleaves cruciform DNA by making single-stranded nicks across the HJ at symmetrical positions within the homologous arms, yielding a 5'-phosphate and a 3'-hydroxyl group; requires a central core of homology in the junction. The consensus cleavage sequence is 5'-(A/T)TT(C/G)-3'. Cleavage occurs on the 3'-side of the TT dinucleotide at the point of strand exchange. HJ branch migration catalyzed by RuvA-RuvB allows RuvC to scan DNA until it finds its consensus sequence, where it cleaves and resolves the cruciform DNA. This chain is Crossover junction endodeoxyribonuclease RuvC, found in Thiobacillus denitrificans (strain ATCC 25259 / T1).